Consider the following 180-residue polypeptide: ATP-dependent protease subunit HslV (180 aa).

The active site involves Thr-5. The Na(+) site is built by Gly-161, Cys-164, and Thr-167.

This sequence belongs to the peptidase T1B family. HslV subfamily. In terms of assembly, a double ring-shaped homohexamer of HslV is capped on each side by a ring-shaped HslU homohexamer. The assembly of the HslU/HslV complex is dependent on binding of ATP.

It localises to the cytoplasm. The catalysed reaction is ATP-dependent cleavage of peptide bonds with broad specificity.. Its activity is regulated as follows. Allosterically activated by HslU binding. Its function is as follows. Protease subunit of a proteasome-like degradation complex believed to be a general protein degrading machinery. In Campylobacter jejuni subsp. jejuni serotype O:6 (strain 81116 / NCTC 11828), this protein is ATP-dependent protease subunit HslV.